We begin with the raw amino-acid sequence, 432 residues long: Meiotically up-regulated gene 134 protein (432 aa).

It belongs to the UPF0300 family.

The protein resides in the cytoplasm. The protein localises to the cell cortex. Functionally, has a role in meiosis. The protein is Meiotically up-regulated gene 134 protein (mug134) of Schizosaccharomyces pombe (strain 972 / ATCC 24843) (Fission yeast).